Consider the following 255-residue polypeptide: Phosphate import ATP-binding protein PstB (255 aa).

An ABC transporter domain is found at 9 to 250 (IAVQNLNFYY…PKIQRTEDYI (242 aa)). 41-48 (GPSGCGKS) provides a ligand contact to ATP.

It belongs to the ABC transporter superfamily. Phosphate importer (TC 3.A.1.7) family. In terms of assembly, the complex is composed of two ATP-binding proteins (PstB), two transmembrane proteins (PstC and PstA) and a solute-binding protein (PstS).

It localises to the cell inner membrane. It carries out the reaction phosphate(out) + ATP + H2O = ADP + 2 phosphate(in) + H(+). Its function is as follows. Part of the ABC transporter complex PstSACB involved in phosphate import. Responsible for energy coupling to the transport system. The chain is Phosphate import ATP-binding protein PstB from Haemophilus influenzae (strain 86-028NP).